The chain runs to 629 residues: MVIGGGHAGVEASIVSAKMGAKTHLITLLIQNIALASCNPAVGGLGKGHLVKEIDALGGVMGVITDKCGIQFRILNASKGPAVRGTRAQIDMDRYSIFAKEIALNTPNLTISQESVESLIYEQDSKGRYIVKGVTTNIGKTYFAKKVILTTGTFLRGLVHIGETKLQNGRFGEMSPQNLSNSLQDMGLTLGRLKTGTCARIDGRSIDFSALEIHNGDEKPPHFSYKTINFSPTQLPCFVTYTNENTHKIIRDNFHRAPLFTGQIEGVGPRYCPSIEDKVNRFADKSRHQLFLEPQTQEAVEYYINGLSTSLPIDVQEAVIHSIKGLENAHITRYGYAIEYDYVEPTELYHTLETKKCANLFLAGQINGTTGYEEAAAQGIMAGINATLSLQNKSFTLARNEAYIGVMIDDLVTKGTKEPYRVFTSRAEYRLLLREDNAYLRLGTYAYKFGLIDKVRYTQIMADKTHIEHTINYLQNHHITPSSSNLTMLASLGLPPISDKALLIHIVGREELDCALLRTLLTHLGITDVESMSDLAIEQIFIESKYFDYIQKQKQQIGQMRQMLQVEIPRDFIFDNIPGLSLEVIEKLKKFTPKSLFEANEISGITPASIDVLHLYIHLHHKKKSQILV.

4–9 is an FAD binding site; it reads GGGHAG. An NAD(+)-binding site is contributed by 268-282; sequence GPRYCPSIEDKVNRF.

It belongs to the MnmG family. Homodimer. Heterotetramer of two MnmE and two MnmG subunits. FAD serves as cofactor.

Its subcellular location is the cytoplasm. Functionally, NAD-binding protein involved in the addition of a carboxymethylaminomethyl (cmnm) group at the wobble position (U34) of certain tRNAs, forming tRNA-cmnm(5)s(2)U34. This chain is tRNA uridine 5-carboxymethylaminomethyl modification enzyme MnmG, found in Helicobacter hepaticus (strain ATCC 51449 / 3B1).